The primary structure comprises 271 residues: GATA transcription factor 19 (271 aa).

Positions 1-23 (MAAEPPADGRDPPADDGAAGDGA) are disordered. The Tify domain occupies 33 to 68 (LSAASEQLTLVYQGEVYVFDPVPPQKVQAVLLVLGG). In terms of domain architecture, CCT spans 95 to 137 (RVASLMRFREKRKERCFDKKIRYSVRKEVAQKMKRRKGQFAGR). The segment at 166-193 (CQNCGISSRLTPAMRRGPAGPRSLCNAC) adopts a GATA-type zinc-finger fold. The disordered stretch occupies residues 238–271 (NQTTMKTDTEMVPEQEQKADVLPPTKEEDSMATS). The segment covering 252-271 (QEQKADVLPPTKEEDSMATS) has biased composition (basic and acidic residues).

Belongs to the type IV zinc-finger family. Class C subfamily.

It localises to the nucleus. Transcriptional activator that specifically binds 5'-GATA-3' or 5'-GAT-3' motifs within gene promoters. This Oryza sativa subsp. japonica (Rice) protein is GATA transcription factor 19.